The following is a 196-amino-acid chain: RNA-binding protein with multiple splicing 2 (196 aa).

The 78-residue stretch at 20-97 folds into the RRM domain; the sequence is RTLFVSGLPI…QTLRLEFAKA (78 aa). The tract at residues 30-40 is important for homodimerization; the sequence is DIKPRELYLLF.

Homodimer. In terms of tissue distribution, expressed in developing heart, pronephros, retina and epiphysis. In adult, high expression in heart, moderate in kidney, undetectable in liver, lung and skeletal muscle.

The protein localises to the cytoplasm. It localises to the nucleus. Its subcellular location is the stress granule. Its function is as follows. RNA-binding protein involved in the regulation of smooth muscle cell differentiation and proliferation in the gastrointestinal system. Binds NOG mRNA, the major inhibitor of the bone morphogenetic protein (BMP) pathway. Mediates an increase of NOG mRNA levels, thereby contributing to the negative regulation of BMP signaling pathway and promoting reversible dedifferentiation and proliferation of smooth muscle cells. Acts as a pre-mRNA alternative splicing regulator. Mediates ACTN1 and FLNB alternative splicing. Likely binds to mRNA tandem CAC trinucleotide or CA dinucleotide motifs. The chain is RNA-binding protein with multiple splicing 2 from Xenopus laevis (African clawed frog).